The sequence spans 396 residues: 1-deoxy-D-xylulose 5-phosphate reductoisomerase (396 aa).

T10, G11, S12, I13, G36, K37, N38, and N124 together coordinate NADPH. K125 provides a ligand contact to 1-deoxy-D-xylulose 5-phosphate. Position 126 (E126) interacts with NADPH. D150 provides a ligand contact to Mn(2+). 1-deoxy-D-xylulose 5-phosphate-binding residues include S151, E152, S186, and H209. Mn(2+) is bound at residue E152. G215 is an NADPH binding site. 1-deoxy-D-xylulose 5-phosphate is bound by residues S222, N227, K228, and E231. Mn(2+) is bound at residue E231.

The protein belongs to the DXR family. Mg(2+) is required as a cofactor. It depends on Mn(2+) as a cofactor.

It carries out the reaction 2-C-methyl-D-erythritol 4-phosphate + NADP(+) = 1-deoxy-D-xylulose 5-phosphate + NADPH + H(+). Its pathway is isoprenoid biosynthesis; isopentenyl diphosphate biosynthesis via DXP pathway; isopentenyl diphosphate from 1-deoxy-D-xylulose 5-phosphate: step 1/6. Its function is as follows. Catalyzes the NADPH-dependent rearrangement and reduction of 1-deoxy-D-xylulose-5-phosphate (DXP) to 2-C-methyl-D-erythritol 4-phosphate (MEP). This Actinobacillus pleuropneumoniae serotype 3 (strain JL03) protein is 1-deoxy-D-xylulose 5-phosphate reductoisomerase.